Here is a 141-residue protein sequence, read N- to C-terminus: Protein C19orf12 (141 aa).

A helical membrane pass occupies residues 40–60; that stretch reads FVGGLVGGPPGLAVGGAVGGL.

This sequence belongs to the C19orf12 family.

Its subcellular location is the mitochondrion. The protein localises to the mitochondrion membrane. It localises to the endoplasmic reticulum. The protein resides in the cytoplasm. It is found in the cytosol. The sequence is that of Protein C19orf12 (C19orf12) from Homo sapiens (Human).